Consider the following 538-residue polypeptide: Putative ABC1 protein At2g40090 (538 aa).

Residues 1–26 form the signal peptide; it reads MAARSLWRTRTKLLVVGTALCGGSGA.

Belongs to the protein kinase superfamily. ADCK protein kinase family.

The protein is Putative ABC1 protein At2g40090 of Arabidopsis thaliana (Mouse-ear cress).